Reading from the N-terminus, the 206-residue chain is 2,3-bisphosphoglycerate-dependent phosphoglycerate mutase (206 aa).

Residues 9-16 (RHGQSEWN), 22-23 (TG), Arg-61, 88-91 (ERDY), Lys-99, 115-116 (RR), and 159-160 (GN) contribute to the substrate site. Catalysis depends on His-10, which acts as the Tele-phosphohistidine intermediate. Residue Glu-88 is the Proton donor/acceptor of the active site.

This sequence belongs to the phosphoglycerate mutase family. BPG-dependent PGAM subfamily. In terms of assembly, homodimer.

The catalysed reaction is (2R)-2-phosphoglycerate = (2R)-3-phosphoglycerate. Its pathway is carbohydrate degradation; glycolysis; pyruvate from D-glyceraldehyde 3-phosphate: step 3/5. Catalyzes the interconversion of 2-phosphoglycerate and 3-phosphoglycerate. The chain is 2,3-bisphosphoglycerate-dependent phosphoglycerate mutase from Azorhizobium caulinodans (strain ATCC 43989 / DSM 5975 / JCM 20966 / LMG 6465 / NBRC 14845 / NCIMB 13405 / ORS 571).